The sequence spans 118 residues: UPF0344 protein RBAM_010920 (118 aa).

A run of 4 helical transmembrane segments spans residues 4-24 (WHIT…GLYG), 33-53 (ITHM…AELF), 62-82 (EYAG…MLVI), and 93-113 (LWIG…HLPI).

It belongs to the UPF0344 family.

The protein resides in the cell membrane. The chain is UPF0344 protein RBAM_010920 from Bacillus velezensis (strain DSM 23117 / BGSC 10A6 / LMG 26770 / FZB42) (Bacillus amyloliquefaciens subsp. plantarum).